The chain runs to 199 residues: Achaete-scute homolog 1 (199 aa).

Positions 37–56 are disordered; the sequence is PAEEQQASKAKPIKRQRSAS. The region spanning 81-133 is the bHLH domain; sequence AAVARRNERERNRVKLVNLGFATLREHVPNGAANKKMSKVETLRSAVEYIRAL. A compositionally biased stretch (polar residues) spans 162 to 179; that stretch reads HDMNSMAGSPVSSYSSDE. Positions 162–189 are disordered; that stretch reads HDMNSMAGSPVSSYSSDEGSYDPLSPEE.

In terms of assembly, efficient DNA binding requires dimerization with another bHLH protein. As to expression, neuronal precursor cells.

The protein localises to the nucleus. In terms of biological role, transcription factor that plays a key role in neuronal differentiation: acts as a pioneer transcription factor, accessing closed chromatin to allow other factors to bind and activate neural pathways. Directly binds the E box motif (5'-CANNTG-3') on promoters and promotes transcription of neuronal genes. The combination of three transcription factors, ASCL1, POU3F2/BRN2 and MYT1L, is sufficient to reprogram fibroblasts and other somatic cells into induced neuronal (iN) cells in vitro. The protein is Achaete-scute homolog 1 (ascl1) of Xenopus laevis (African clawed frog).